A 152-amino-acid chain; its full sequence is Transcriptional regulator MraZ (152 aa).

SpoVT-AbrB domains lie at 5-52 (ATQI…TLSE) and 81-124 (ASEC…DEQA).

Belongs to the MraZ family. In terms of assembly, forms oligomers.

The protein localises to the cytoplasm. It is found in the nucleoid. In terms of biological role, negatively regulates its own expression and that of the subsequent genes in the proximal part of the division and cell wall (dcw) gene cluster. Acts by binding directly to DNA. May also regulate the expression of genes outside the dcw cluster. The chain is Transcriptional regulator MraZ from Photorhabdus laumondii subsp. laumondii (strain DSM 15139 / CIP 105565 / TT01) (Photorhabdus luminescens subsp. laumondii).